We begin with the raw amino-acid sequence, 312 residues long: Olfactory receptor 4F3/4F16/4F29 (312 aa).

At 1 to 25 (MDGENHSVVSEFLFLGLTHSWEIQL) the chain is on the extracellular side. A glycan (N-linked (GlcNAc...) asparagine) is linked at N5. A helical membrane pass occupies residues 26–49 (LLLVFSSVLYVASITGNILIVFSV). Residues 50-57 (TTDPHLHS) are Cytoplasmic-facing. A helical membrane pass occupies residues 58–79 (PMYFLLASLSFIDLGACSVTSP). The Extracellular segment spans residues 80–100 (KMIYDLFRKRKVISFGGCIAQ). Residues C97 and C189 are joined by a disulfide bond. The chain crosses the membrane as a helical span at residues 101–120 (IFFIHVVGGVEMVLLIAMAF). Residues 121–139 (DRYVALCKPLHYLTIMSPR) are Cytoplasmic-facing. The chain crosses the membrane as a helical span at residues 140–158 (MCLSFLAVAWTLGVSHSLF). Over 159 to 195 (QLAFLVNLAFCGPNVLDSFYCDLPRLLRLACTDTYRL) the chain is Extracellular. A helical membrane pass occupies residues 196–219 (QFMVTVNSGFICVGTFFILLISYV). The Cytoplasmic portion of the chain corresponds to 220–235 (FILFTVWKHSSGGSSK). Residues 236–258 (ALSTLSAHSTVVLLFFGPPMFVY) form a helical membrane-spanning segment. At 259–269 (TRPHPNSQMDK) the chain is on the extracellular side. Residues 270–289 (FLAIFDAVLTPFLNPVVYTF) traverse the membrane as a helical segment. Over 290–312 (RNKEMKAAIKRVCKQLVIYKRIS) the chain is Cytoplasmic.

Belongs to the G-protein coupled receptor 1 family.

It localises to the cell membrane. Its function is as follows. Odorant receptor. The sequence is that of Olfactory receptor 4F3/4F16/4F29 (OR4F3) from Homo sapiens (Human).